The chain runs to 534 residues: NAD(P)H-quinone oxidoreductase chain 4 2 (534 aa).

13 helical membrane-spanning segments follow: residues 6-26 (FPWL…IPLL), 38-58 (WYSL…FWTS), 93-113 (LILL…PVTF), 117-137 (FFYF…AVQD), 138-158 (LLVF…LLAI), 171-191 (FILY…AMAF), 210-230 (IGFQ…KLPI), 245-265 (TAPV…YALF), 279-299 (FAPI…LTSF), 313-333 (ISHM…GLSG), 335-355 (MLQM…VGAT), 377-399 (MFAM…GFVA), and 419-439 (VVVI…LLSM).

Belongs to the complex I subunit 4 family.

The protein localises to the cellular thylakoid membrane. The catalysed reaction is a plastoquinone + NADH + (n+1) H(+)(in) = a plastoquinol + NAD(+) + n H(+)(out). It carries out the reaction a plastoquinone + NADPH + (n+1) H(+)(in) = a plastoquinol + NADP(+) + n H(+)(out). In terms of biological role, NDH-1 shuttles electrons from NAD(P)H, via FMN and iron-sulfur (Fe-S) centers, to quinones in the respiratory chain. The immediate electron acceptor for the enzyme in this species is believed to be plastoquinone. Couples the redox reaction to proton translocation (for every two electrons transferred, four hydrogen ions are translocated across the cytoplasmic membrane), and thus conserves the redox energy in a proton gradient. The polypeptide is NAD(P)H-quinone oxidoreductase chain 4 2 (Synechococcus elongatus (strain ATCC 33912 / PCC 7942 / FACHB-805) (Anacystis nidulans R2)).